Here is a 557-residue protein sequence, read N- to C-terminus: MKKGYEVLRDPHLNKGMAFTLEERQQLNIHGLLPPCFLGQDAQVYSILKNFERLTSDLDRYILLMSLQDRNEKLFYKVLTSDIERFMPIVYTPTVGLACQHYGLAFRRPRGLFITIHDRGHIATMLQSWPESVIKAIVVTDGERILGLGDLGCYGMGIPVGKLALYTACGGVKPHQCLPVMLDVGTDNETLLKDPLYIGLRHKRIRGQAYDDLLDEFMEAVTSRYGMNCLIQFEDFANANAFRLLHKYRNKYCTFNDDIQGTASVAVAGLLAALRITKNRLSDHTVLFQGAGEAALGIANLIVMAMQKEGVSKEEAIKRIWMVDSKGLIVKGRASLTPEKEHFAHEHCEMKNLEDIVKDIKPTVLIGVAAIGGAFTQQILQDMAAFNKRPIIFALSNPTSKAECTAEQLYKYTEGRGIFASGSPFDPVTLPSGQTLYPGQGNNSYVFPGVALGVISCGLKHIGDDVFLTTAEVIAQEVSEENLQEGRLYPPLVTIQQVSLKIAVRIAKEAYRNNTASTYPQPEDLEAFIRSQVYSTDYNCFVADSYTWPEEAMKVKL.

Tyr91 acts as the Proton donor in catalysis. An NADP(+)-binding site is contributed by Arg144. The substrate site is built by Arg144 and Lys162. Residue Lys162 is the Proton acceptor of the active site. Glu234 and Asp235 together coordinate Mn(2+). Residue Asn238 coordinates NADP(+). Mn(2+) is bound at residue Asp258. NADP(+) is bound by residues 291–294 (AGEA), Ser325, Asn397, and Asn443. Residue Asn443 participates in substrate binding.

This sequence belongs to the malic enzymes family. As to quaternary structure, homotetramer. Mg(2+) serves as cofactor. It depends on Mn(2+) as a cofactor. Post-translationally, the N-terminus is blocked.

Its subcellular location is the cytoplasm. The enzyme catalyses (S)-malate + NADP(+) = pyruvate + CO2 + NADPH. The catalysed reaction is oxaloacetate + H(+) = pyruvate + CO2. The protein is NADP-dependent malic enzyme (ME1) of Columba livia (Rock dove).